Here is a 236-residue protein sequence, read N- to C-terminus: Phosphoribosylaminoimidazole-succinocarboxamide synthase (236 aa).

The protein belongs to the SAICAR synthetase family.

The catalysed reaction is 5-amino-1-(5-phospho-D-ribosyl)imidazole-4-carboxylate + L-aspartate + ATP = (2S)-2-[5-amino-1-(5-phospho-beta-D-ribosyl)imidazole-4-carboxamido]succinate + ADP + phosphate + 2 H(+). It functions in the pathway purine metabolism; IMP biosynthesis via de novo pathway; 5-amino-1-(5-phospho-D-ribosyl)imidazole-4-carboxamide from 5-amino-1-(5-phospho-D-ribosyl)imidazole-4-carboxylate: step 1/2. This is Phosphoribosylaminoimidazole-succinocarboxamide synthase from Pseudomonas savastanoi pv. phaseolicola (strain 1448A / Race 6) (Pseudomonas syringae pv. phaseolicola (strain 1448A / Race 6)).